Here is a 214-residue protein sequence, read N- to C-terminus: Protein DEHYDRATION-INDUCED 19 homolog 5 (214 aa).

Phosphoserine is present on serine 110. The segment at 148-185 is disordered; it reads PKKSKLVQPDSSSEASMEDNSLIRDSTEKDWESPSPLS. The span at 156–166 shows a compositional bias: polar residues; sequence PDSSSEASMED. Over residues 168 to 179 the composition is skewed to basic and acidic residues; that stretch reads SLIRDSTEKDWE.

It belongs to the Di19 family. Post-translationally, phosphorylated in vitro by CPK3 or CPK11. Expressed in seedlings, roots, leaves, stems, flowers and siliques.

The protein resides in the nucleus. The sequence is that of Protein DEHYDRATION-INDUCED 19 homolog 5 (DI19-5) from Arabidopsis thaliana (Mouse-ear cress).